The primary structure comprises 239 residues: Ribonuclease PH (239 aa).

Phosphate contacts are provided by residues Arg86 and 124–126 (GTR).

This sequence belongs to the RNase PH family. As to quaternary structure, homohexameric ring arranged as a trimer of dimers.

It catalyses the reaction tRNA(n+1) + phosphate = tRNA(n) + a ribonucleoside 5'-diphosphate. Functionally, phosphorolytic 3'-5' exoribonuclease that plays an important role in tRNA 3'-end maturation. Removes nucleotide residues following the 3'-CCA terminus of tRNAs; can also add nucleotides to the ends of RNA molecules by using nucleoside diphosphates as substrates, but this may not be physiologically important. Probably plays a role in initiation of 16S rRNA degradation (leading to ribosome degradation) during starvation. This chain is Ribonuclease PH, found in Rhodopseudomonas palustris (strain BisB18).